A 240-amino-acid chain; its full sequence is Biosynthetic peptidoglycan transglycosylase (240 aa).

A helical transmembrane segment spans residues 27–47; it reads VVLLFFFAVFALLLIFRFVPI.

Belongs to the glycosyltransferase 51 family.

Its subcellular location is the cell inner membrane. The enzyme catalyses [GlcNAc-(1-&gt;4)-Mur2Ac(oyl-L-Ala-gamma-D-Glu-L-Lys-D-Ala-D-Ala)](n)-di-trans,octa-cis-undecaprenyl diphosphate + beta-D-GlcNAc-(1-&gt;4)-Mur2Ac(oyl-L-Ala-gamma-D-Glu-L-Lys-D-Ala-D-Ala)-di-trans,octa-cis-undecaprenyl diphosphate = [GlcNAc-(1-&gt;4)-Mur2Ac(oyl-L-Ala-gamma-D-Glu-L-Lys-D-Ala-D-Ala)](n+1)-di-trans,octa-cis-undecaprenyl diphosphate + di-trans,octa-cis-undecaprenyl diphosphate + H(+). It participates in cell wall biogenesis; peptidoglycan biosynthesis. In terms of biological role, peptidoglycan polymerase that catalyzes glycan chain elongation from lipid-linked precursors. The protein is Biosynthetic peptidoglycan transglycosylase of Haemophilus influenzae (strain PittEE).